A 708-amino-acid chain; its full sequence is Polyribonucleotide nucleotidyltransferase (708 aa).

Positions 488 and 494 each coordinate Mg(2+). The KH domain maps to 555 to 615; that stretch reads PIIKVTKVDP…ENVDKAIELI (61 aa). Positions 625 to 692 constitute an S1 motif domain; it reads GEVLEGKVTR…DLGRLQFKRV (68 aa).

Belongs to the polyribonucleotide nucleotidyltransferase family. Mg(2+) serves as cofactor.

It localises to the cytoplasm. It catalyses the reaction RNA(n+1) + phosphate = RNA(n) + a ribonucleoside 5'-diphosphate. Its function is as follows. Involved in mRNA degradation. Catalyzes the phosphorolysis of single-stranded polyribonucleotides processively in the 3'- to 5'-direction. The sequence is that of Polyribonucleotide nucleotidyltransferase from Thermotoga petrophila (strain ATCC BAA-488 / DSM 13995 / JCM 10881 / RKU-1).